An 88-amino-acid polypeptide reads, in one-letter code: Elongation factor 1-beta (88 aa).

It belongs to the EF-1-beta/EF-1-delta family.

In terms of biological role, promotes the exchange of GDP for GTP in EF-1-alpha/GDP, thus allowing the regeneration of EF-1-alpha/GTP that could then be used to form the ternary complex EF-1-alpha/GTP/AAtRNA. The chain is Elongation factor 1-beta (ef1b) from Thermoplasma volcanium (strain ATCC 51530 / DSM 4299 / JCM 9571 / NBRC 15438 / GSS1).